Consider the following 217-residue polypeptide: Probable transaldolase (217 aa).

Residue K83 is the Schiff-base intermediate with substrate of the active site.

The protein belongs to the transaldolase family. Type 3B subfamily.

The protein localises to the cytoplasm. The catalysed reaction is D-sedoheptulose 7-phosphate + D-glyceraldehyde 3-phosphate = D-erythrose 4-phosphate + beta-D-fructose 6-phosphate. The protein operates within carbohydrate degradation; pentose phosphate pathway; D-glyceraldehyde 3-phosphate and beta-D-fructose 6-phosphate from D-ribose 5-phosphate and D-xylulose 5-phosphate (non-oxidative stage): step 2/3. Functionally, transaldolase is important for the balance of metabolites in the pentose-phosphate pathway. This is Probable transaldolase from Sinorhizobium medicae (strain WSM419) (Ensifer medicae).